The primary structure comprises 375 residues: ORC1-type DNA replication protein 3 (375 aa).

ATP is bound by residues 66-70 (TGKTT), tyrosine 209, and arginine 221.

Belongs to the CDC6/cdc18 family.

Its function is as follows. Involved in regulation of DNA replication. The chain is ORC1-type DNA replication protein 3 (cdc6c) from Haloarcula marismortui (strain ATCC 43049 / DSM 3752 / JCM 8966 / VKM B-1809) (Halobacterium marismortui).